The primary structure comprises 469 residues: Dihydrolipoyl dehydrogenase (469 aa).

FAD-binding positions include 34 to 42, Lys51, and Gly114; that span reads EKQYWGGVC. The cysteines at positions 42 and 47 are disulfide-linked. NAD(+)-binding positions include 179–183, Glu202, and 269–272; these read GAGAI and SVGF. Residues Asp312 and Ala320 each coordinate FAD. The Proton acceptor role is filled by His448.

This sequence belongs to the class-I pyridine nucleotide-disulfide oxidoreductase family. Homodimer. Part of an unusual ODH/PDH supercomplex, consisting of AceE (E1), AceF (E2), and Lpd (E3) together with OdhA (E1+E2). FAD is required as a cofactor.

The protein localises to the cytoplasm. It carries out the reaction N(6)-[(R)-dihydrolipoyl]-L-lysyl-[protein] + NAD(+) = N(6)-[(R)-lipoyl]-L-lysyl-[protein] + NADH + H(+). It functions in the pathway carbohydrate metabolism; tricarboxylic acid cycle; succinyl-CoA from 2-oxoglutarate (dehydrogenase route): step 1/1. Lipoamide dehydrogenase is an essential component of the pyruvate dehydrogenase (PDH) and 2-oxoglutarate dehydrogenase (ODH) complexes. Catalyzes the reoxidation of dihydrolipoyl groups which are covalently attached to the lipoate acyltransferase components (E2) of the complexes. Also catalyzes a reversible NADH:NAD(+) transhydrogenation, and is able to transfer electrons from NADH to various redox-active compounds and quinones. May be involved in quinone redox cycling in C.glutamicum. In Corynebacterium glutamicum (strain ATCC 13032 / DSM 20300 / JCM 1318 / BCRC 11384 / CCUG 27702 / LMG 3730 / NBRC 12168 / NCIMB 10025 / NRRL B-2784 / 534), this protein is Dihydrolipoyl dehydrogenase (lpd).